The following is a 397-amino-acid chain: Glycine betaine/carnitine transport ATP-binding protein GbuA (397 aa).

In terms of domain architecture, ABC transporter spans 28 to 264 (KSKTDILKET…PANEYVEKFI (237 aa)). 60 to 67 (GLSGSGKS) contributes to the ATP binding site. CBS domains are found at residues 279–335 (MIRP…NITS) and 340–395 (LHRD…EVNV).

It belongs to the ABC transporter superfamily. The complex is composed of two ATP-binding proteins (GbuA), two transmembrane proteins (GbuB) and a solute-binding protein (GbuC).

It catalyses the reaction a quaternary ammonium(out) + ATP + H2O = a quaternary ammonium(in) + ADP + phosphate + H(+). With respect to regulation, the complex is activated by an osmotic gradient or by low temperature. Its function is as follows. Part of the ABC transporter complex GbuABC involved in glycine betaine uptake. Responsible for energy coupling to the transport system. Involved, with BetL and OpuC, in osmoprotection and cryoprotection of Listeria. Can also uptake carnitine when carnitine is abundant in the growth medium. This chain is Glycine betaine/carnitine transport ATP-binding protein GbuA (gbuA), found in Listeria monocytogenes serotype 1/2a (strain 10403S).